Reading from the N-terminus, the 944-residue chain is Protein unc-45 homolog A (944 aa).

The disordered stretch occupies residues 1–25; sequence MTVSGPGTPEPRPSDPGASSAEELR. 3 TPR repeats span residues 21–54, 58–91, and 92–125; these read AEEL…GATP, AILH…DGGD, and VKAL…EPKN. The residue at position 70 (Lys70) is an N6-acetyllysine. Lys483 carries the N6-acetyllysine modification.

In terms of assembly, interacts with PGR isoforms A and B as well as with NR3C1 in the absence of ligand, and with HSP90AB1. Binding to HSP90AB1 involves 2 UNC45A monomers per HSP90AB1 dimer.

Its subcellular location is the cytoplasm. The protein resides in the perinuclear region. The protein localises to the nucleus. May act as co-chaperone for HSP90 (Potential). Prevents the stimulation of HSP90AB1 ATPase activity by AHSA1. Positive factor in promoting PGR function in the cell. May be necessary for proper folding of myosin (Potential). Necessary for normal cell proliferation. Necessary for normal myotube formation and myosin accumulation during muscle cell development. May play a role in erythropoiesis in stroma cells in the spleen. This chain is Protein unc-45 homolog A (Unc45a), found in Rattus norvegicus (Rat).